Reading from the N-terminus, the 285-residue chain is Pantothenate synthetase (285 aa).

30 to 37 is an ATP binding site; that stretch reads MGFLHEGH. H37 (proton donor) is an active-site residue. Q61 contacts (R)-pantoate. Q61 contributes to the beta-alanine binding site. Residue 147-150 participates in ATP binding; that stretch reads GQKD. Q153 contacts (R)-pantoate. ATP contacts are provided by residues V176 and 184-187; that span reads KSSR.

This sequence belongs to the pantothenate synthetase family. Homodimer.

It is found in the cytoplasm. The enzyme catalyses (R)-pantoate + beta-alanine + ATP = (R)-pantothenate + AMP + diphosphate + H(+). The protein operates within cofactor biosynthesis; (R)-pantothenate biosynthesis; (R)-pantothenate from (R)-pantoate and beta-alanine: step 1/1. Catalyzes the condensation of pantoate with beta-alanine in an ATP-dependent reaction via a pantoyl-adenylate intermediate. The sequence is that of Pantothenate synthetase from Listeria innocua serovar 6a (strain ATCC BAA-680 / CLIP 11262).